Here is a 123-residue protein sequence, read N- to C-terminus: uncharacterized protein (123 aa).

The interval 34–123 is disordered; it reads PEKISQTVKK…MNRDGGVKKE (90 aa). Composition is skewed to basic and acidic residues over residues 50 to 60, 74 to 100, and 107 to 123; these read KKIDENKDKSP, TAKDAKDTDYQQKAKDAGKKIKEEFSQ, and EETRREGMNRDGGVKKE.

The protein localises to the mitochondrion. This is an uncharacterized protein from Schizosaccharomyces pombe (strain 972 / ATCC 24843) (Fission yeast).